The chain runs to 729 residues: MKITKKPSKVQQFYDQLARAAFADPFSFLGPYIPAEQGALRVWMPGADNVALVVEGQARVALEREGEGGFVLKDGRNLRFTHYQLAVDWAGTEQLLDDPYQYHGLYAEYEDLHTPKQMYHHMGAQFVTLERDGKMVSGVRFLVYAPHAAACSLIGAFNHWDGRRHPMQRLDYGIWGIFIPGLPEGTQYKFELKGPHGEGLPHKADPWGFYAEQYPSFASVTYDHRRYQWQDTAWQQRPVTEKRKQALSFYELHVGSWKRGENGEFLNYRELADQLVPYLVEMGYTHVELMPVAEHPFYGSWGYQPVGLFAPTSRYGSPDDFKYFVDLCHQAGIGVVLDWVPAHFPSDSHGLANFDGTPLFHDPDPRRGWHQDWNSYIYDLGREHVRRFLVANALYWFEMFHIDGIRVDAVASMLYLDYSRSHDQWIPNVDGGRENYDAIATFKWMNEEVYKHFPNAMTIAEESTAFPGVSAPTFMGGLGFGFKWNMGWMHDSLSYIKEDPVHRKYHHNTLTFPLIYAFSENYVLSLSHDEVVYGKRSLMYKMPGDEWQQTANLRAYLGYMYGQPGKKLNFMGTELGQTAEWDHDGQLQWFLTQFERHAGIQRLVRDLNHLYQAQTALHQLDCDPRGFEWRLQDNADLSVIAHERMDEAGNRVLVITNFTPVPQQEFRLGVPKTGKYRLLLNTDAKQYNGSDYPVLQDVSTEAISSEGLDQSLLLSVPPLATLFYQWSAK.

Asp408 functions as the Nucleophile in the catalytic mechanism. Catalysis depends on Glu461, which acts as the Proton donor.

It belongs to the glycosyl hydrolase 13 family. GlgB subfamily. Monomer.

It carries out the reaction Transfers a segment of a (1-&gt;4)-alpha-D-glucan chain to a primary hydroxy group in a similar glucan chain.. The protein operates within glycan biosynthesis; glycogen biosynthesis. In terms of biological role, catalyzes the formation of the alpha-1,6-glucosidic linkages in glycogen by scission of a 1,4-alpha-linked oligosaccharide from growing alpha-1,4-glucan chains and the subsequent attachment of the oligosaccharide to the alpha-1,6 position. This Vibrio cholerae serotype O1 (strain ATCC 39315 / El Tor Inaba N16961) protein is 1,4-alpha-glucan branching enzyme GlgB.